The chain runs to 111 residues: Probable 4-amino-4-deoxy-L-arabinose-phosphoundecaprenol flippase subunit ArnE (111 aa).

Over 1 to 35 (MIWLTLVFASLLSVAGQLCQKQATCFVAINKRRKH) the chain is Cytoplasmic. Residues 36-56 (IVLWLGLALACLGLAMVLWLL) traverse the membrane as a helical segment. Residues 40–109 (LGLALACLGL…IIGGIVILGS (70 aa)) enclose the EamA domain. Topologically, residues 57 to 60 (VLQN) are periplasmic. A helical membrane pass occupies residues 61 to 81 (VPVGIAYPMLSLNFVWVTLAA). Residues 82–87 (VKLWHE) lie on the Cytoplasmic side of the membrane. Residues 88 to 108 (PVSPRHWCGVAFIIGGIVILG) traverse the membrane as a helical segment. At 109–111 (STV) the chain is on the periplasmic side.

This sequence belongs to the ArnE family. As to quaternary structure, heterodimer of ArnE and ArnF.

Its subcellular location is the cell inner membrane. Its pathway is bacterial outer membrane biogenesis; lipopolysaccharide biosynthesis. In terms of biological role, translocates 4-amino-4-deoxy-L-arabinose-phosphoundecaprenol (alpha-L-Ara4N-phosphoundecaprenol) from the cytoplasmic to the periplasmic side of the inner membrane. The protein is Probable 4-amino-4-deoxy-L-arabinose-phosphoundecaprenol flippase subunit ArnE of Escherichia coli (strain ATCC 8739 / DSM 1576 / NBRC 3972 / NCIMB 8545 / WDCM 00012 / Crooks).